The sequence spans 303 residues: N-acetyl-D-glucosamine kinase (303 aa).

ATP-binding positions include 4–11 (GFDIGGSK) and 133–140 (GVGGGLIV). Zn(2+) is bound by residues H157, C177, C179, and C184.

Belongs to the ROK (NagC/XylR) family. NagK subfamily.

It carries out the reaction N-acetyl-D-glucosamine + ATP = N-acetyl-D-glucosamine 6-phosphate + ADP + H(+). Its pathway is cell wall biogenesis; peptidoglycan recycling. Catalyzes the phosphorylation of N-acetyl-D-glucosamine (GlcNAc) derived from cell-wall degradation, yielding GlcNAc-6-P. The polypeptide is N-acetyl-D-glucosamine kinase (Erwinia tasmaniensis (strain DSM 17950 / CFBP 7177 / CIP 109463 / NCPPB 4357 / Et1/99)).